The primary structure comprises 572 residues: Phosphoenolpyruvate-protein phosphotransferase (572 aa).

His190 acts as the Tele-phosphohistidine intermediate in catalysis. Positions 297 and 333 each coordinate phosphoenolpyruvate. Residues Glu427 and Asp451 each contribute to the Mg(2+) site. Residues 450 to 451 and Arg461 contribute to the phosphoenolpyruvate site; that span reads ND. The active-site Proton donor is the Cys498.

The protein belongs to the PEP-utilizing enzyme family. In terms of assembly, homodimer. The cofactor is Mg(2+).

The protein resides in the cytoplasm. The catalysed reaction is L-histidyl-[protein] + phosphoenolpyruvate = N(pros)-phospho-L-histidyl-[protein] + pyruvate. Functionally, general (non sugar-specific) component of the phosphoenolpyruvate-dependent sugar phosphotransferase system (sugar PTS). This major carbohydrate active-transport system catalyzes the phosphorylation of incoming sugar substrates concomitantly with their translocation across the cell membrane. Enzyme I transfers the phosphoryl group from phosphoenolpyruvate (PEP) to the phosphoryl carrier protein (HPr). The protein is Phosphoenolpyruvate-protein phosphotransferase (ptsI) of Mycoplasma pneumoniae (strain ATCC 29342 / M129 / Subtype 1) (Mycoplasmoides pneumoniae).